Reading from the N-terminus, the 520-residue chain is Mu-like prophage FluMu protein gp29 (520 aa).

It to phage Mu protein gp29.

The protein is Mu-like prophage FluMu protein gp29 of Haemophilus influenzae (strain ATCC 51907 / DSM 11121 / KW20 / Rd).